A 257-amino-acid chain; its full sequence is Thioesterase frbE (257 aa).

It belongs to the AMT4 thioesterase family.

Its pathway is antifungal biosynthesis. Functionally, thioesterase; part of the gene cluster that mediates the biosynthesis of the antifungal antibiotic FR901469, an inhibitor of beta-1,3-glucansynthase, exerting antifungal activity against the pathogenes Candida albicans and Aspergillus fumigatus. FR901469 is a cyclic depsipeptide containing 12 amino acid residues and a fatty acid chain. The NRPS frbI contains 12 modules responsible for the formation of the depsipeptide backbone which is denoted as Acyl-Thr-Ala-Tyr-Val-4OHPro-Thr-Thr-3OHPro-threo3OHGln-Gly-Thr-Orn-OH (C71H116N14O23). The PKS frbB is probably involved in the production of the hydrocarbon chain, and the acyl-CoA ligase frbC might be involved in the transport of the chain to the peptide ptoduct of frbI. Because FR901469 contains 3 hydroxylated amino acid residues, the 3 oxygenases frbA, frbH, and frbJ might be participating in amino acid hydroxylation. As no thioesterase domains were detected in frbI or frbB, the thioesterases frbD and frbE may instead release and cyclize the products of the NRPS and PKS, respectively. This chain is Thioesterase frbE, found in Dothideomycetidae sp. (strain 11243) (Fungal sp. (strain No.11243)).